A 98-amino-acid chain; its full sequence is Co-chaperonin GroES (98 aa).

This sequence belongs to the GroES chaperonin family. Heptamer of 7 subunits arranged in a ring. Interacts with the chaperonin GroEL.

It is found in the cytoplasm. Functionally, together with the chaperonin GroEL, plays an essential role in assisting protein folding. The GroEL-GroES system forms a nano-cage that allows encapsulation of the non-native substrate proteins and provides a physical environment optimized to promote and accelerate protein folding. GroES binds to the apical surface of the GroEL ring, thereby capping the opening of the GroEL channel. The sequence is that of Co-chaperonin GroES from Bartonella tribocorum (strain CIP 105476 / IBS 506).